The chain runs to 181 residues: ADP-ribosylation factor 1-like 2 (181 aa).

A lipid anchor (N-myristoyl glycine) is attached at Gly-2. An important for the stable binding to the membranes region spans residues 3–16 (NVFGSLFKGLFGKR). Residues 24-32 (GLDAAGKTT), 126-129 (NKQD), and Ala-160 each bind GTP.

This sequence belongs to the small GTPase superfamily. Arf family. As to expression, expressed in hypodermis, intestine, spermatheca, uterus, gonadal sheath, vulva cells, pharynx muscle, body wall muscle, head neurons, ventral nerve cord.

The protein resides in the golgi apparatus membrane. It catalyses the reaction GTP + H2O = GDP + phosphate + H(+). Its activity is regulated as follows. Alternates between an inactive GDP-bound form and an active GTP-bound form. Activated by a guanine nucleotide-exchange factor (GEF) and inactivated by GTPase-activating protein (GAP). Small GTPase involved in protein trafficking between different compartments. Modulates vesicle budding and uncoating within the Golgi complex. In its GTP-bound form, triggers the recruitment of coatomer proteins to the Golgi membrane. The hydrolysis of ARF1-bound GTP, which is mediated by ARFGAPs proteins, is required for dissociation of coat proteins from Golgi membranes and vesicles. Involved in endoplasmic reticulum dynamics during embryogenesis. Also required for adult germline function. Plays a role in cell shedding during embryogenesis probably by promoting the endocytosis of cell adhesion molecules. During neurogenesis, involved in cell autonomous Q.p neuroblast asymmetric divisions that generate one precursor cell and one apoptotic cell, probably by controlling endocytosis. Plays a role in maintaining mitochondrial morphology. In Caenorhabditis elegans, this protein is ADP-ribosylation factor 1-like 2.